A 332-amino-acid chain; its full sequence is Centrosomal AT-AC splicing factor (332 aa).

The required for centrosome location stretch occupies residues Met-1–Val-169. Position 31 is an N6-acetyllysine; by NAT10 (Lys-31). Residues Leu-137–Ser-168 are a coiled coil. Positions Val-169–Leu-213 are disordered. Residues Gly-190–Asn-204 are compositionally biased toward polar residues.

In terms of assembly, interacts with SASS6; the interaction increases with CENATAC acetylation. Post-translationally, acetylated. Acetylation oscillates throughout the cell cycle, and the acetylation state at Lys-31 is regulated by the deacetylase SIRT1 and the acetyltransferase NAT10. Deacetylated CENATAC is responsible for its centrosome targeting, and acetylated CENATAC promotes SASS6 degradation by enhancing the binding affinity of SASS6 for APC/C E3 ubiquitin-protein ligase complex/FZR1.

The protein resides in the cytoplasm. The protein localises to the cytoskeleton. It localises to the microtubule organizing center. Its subcellular location is the centrosome. In terms of biological role, component of the minor spliceosome that promotes splicing of a specific, rare minor intron subtype. Negative regulator of centrosome duplication. Constrains centriole number by modulating the degradation of the centrosome-duplication-associated protein SASS6 in an acetylation-dependent manner. SIRT1 deacetylates CENATAC in G1 phase, allowing for SASS6 accumulation on the centrosome and subsequent procentriole assembly. The CENATAC acetylation level is restored in mitosis by NAT10, promoting SASS6 proteasome degradation by facilitating SASS6 binding to APC/C E3 ubiquitin-protein ligase complex/FZR1. This chain is Centrosomal AT-AC splicing factor, found in Homo sapiens (Human).